An 89-amino-acid polypeptide reads, in one-letter code: Cell division topological specificity factor (89 aa).

The protein belongs to the MinE family.

Prevents the cell division inhibition by proteins MinC and MinD at internal division sites while permitting inhibition at polar sites. This ensures cell division at the proper site by restricting the formation of a division septum at the midpoint of the long axis of the cell. The chain is Cell division topological specificity factor from Legionella pneumophila (strain Paris).